Reading from the N-terminus, the 92-residue chain is Probable Fe(2+)-trafficking protein (92 aa).

Belongs to the Fe(2+)-trafficking protein family.

In terms of biological role, could be a mediator in iron transactions between iron acquisition and iron-requiring processes, such as synthesis and/or repair of Fe-S clusters in biosynthetic enzymes. The chain is Probable Fe(2+)-trafficking protein from Xanthomonas oryzae pv. oryzae (strain MAFF 311018).